The sequence spans 620 residues: Siderophore iron transporter ARN2 (620 aa).

Residues 1–42 (MIEVPEDNRSSQTKRKNTEKNCNELMVDEKMDDDSSPRDEMK) are disordered. Positions 16–42 (KNTEKNCNELMVDEKMDDDSSPRDEMK) are enriched in basic and acidic residues. A run of 14 helical transmembrane segments spans residues 71–93 (IFLFSAFICTFAYGLDSSIRGTY), 106–128 (LISTVSVIVLMISAVSQVIFGGL), 135–152 (LTLFLVSIVLYIVGTIIQ), 162–184 (AAGAVFYYVGLVGVMLQVVLMLS), 191–213 (WRLFYTLIPSWPSIITTWVSGSV), 223–245 (WSWNIAMWAFIFPLCCIPLILCM), 286–308 (VVGVLLFTAGVGCILVPLTLAGG), 318–335 (IIGPFVLGFVLVPGFIYW), 355–377 (VWAPLGIMFFICFVYQMAAGYLY), 392–414 (TRIINLYSFVTAVVAPFLGLIVT), 421–438 (SYIIFGGSLYFITMGLFY), 448–470 (GGIIAGMVIWGLSSCLFDYPTIV), 491–513 (VFRIGGAVAAAISGAIWTQSLYP), and 561–578 (VIVALVFSAPMFLLTFCV).

The protein belongs to the major facilitator superfamily.

The protein resides in the endosome membrane. In terms of biological role, involved in the transport of siderophore triacestylfusarinine C and so has a role in iron homeostasis. The sequence is that of Siderophore iron transporter ARN2 (ARN2) from Saccharomyces cerevisiae (strain ATCC 204508 / S288c) (Baker's yeast).